A 327-amino-acid polypeptide reads, in one-letter code: uncharacterized protein (327 aa).

Topologically, residues 1–19 are cytoplasmic; sequence MSIAQDRGIVFKLLSIYRA. Residues 20–40 traverse the membrane as a helical segment; it reads AAGIFMALAQLIVIFFGYCDF. The Extracellular portion of the chain corresponds to 41–51; the sequence is KIKGYRIASYN. Residues 52–72 form a helical membrane-spanning segment; it reads APTFASSFIILAVCLLLVVVL. Residues 73-104 are Cytoplasmic-facing; that stretch reads ENPEVKVTNSENSLFSALKQFFRVERKKLISC. Residues 105 to 125 traverse the membrane as a helical segment; it reads LILLWSMFLSSFIMSEVVYFM. The Extracellular segment spans residues 126–141; sequence PLFLTLHVNWDTKFQG. The chain crosses the membrane as a helical span at residues 142-162; that stretch reads IAFMVASILGVTGSYFAPKLI. The Cytoplasmic portion of the chain corresponds to 163 to 199; sequence NVGCSCGRAKDGGLEESDTTGSETVEVKKKDSLYSGQ. Residues 200–220 traverse the membrane as a helical segment; sequence VFLSIFALFVSLLGQAFMIGA. Residues 221 to 235 lie on the Extracellular side of the membrane; the sequence is SEALKHKSMPPTNSG. The helical transmembrane segment at 236-256 threads the bilayer; that stretch reads IFFSAGMSITLLGYNFLASSI. The Cytoplasmic portion of the chain corresponds to 257-275; it reads PALFSMYIDPKLKVQLMPS. The chain crosses the membrane as a helical span at residues 276 to 296; it reads IGAISGIGKLVAPIVLAALYG. Residues 297 to 300 are Extracellular-facing; it reads TRLG. The chain crosses the membrane as a helical span at residues 301-321; that stretch reads LSIAVGFGMILVAVSIPPLIW. The Cytoplasmic segment spans residues 322–327; that stretch reads LRKKRC.

The protein localises to the membrane. This is an uncharacterized protein from Saccharomyces cerevisiae (strain ATCC 204508 / S288c) (Baker's yeast).